A 430-amino-acid chain; its full sequence is Sorting nexin-4 (430 aa).

Residues 1 to 18 (MDSASADASVTGSGNAKG) are compositionally biased toward polar residues. Residues 1–22 (MDSASADASVTGSGNAKGSSAE) form a disordered region. The PX domain maps to 33-162 (LEILVSDPQK…IFLVGNEWDT (130 aa)). Residues arginine 83, lysine 109, and arginine 128 each contribute to the a 1,2-diacyl-sn-glycero-3-phospho-(1D-myo-inositol-3-phosphate) site. The stretch at 351 to 414 (ASRRDKINKL…NNLADENIKF (64 aa)) forms a coiled coil.

Belongs to the sorting nexin family.

The protein resides in the cytoplasm. It is found in the cytosol. The protein localises to the preautophagosomal structure membrane. Its subcellular location is the endosome membrane. Functionally, sorting nexin, involved in the separation or division of vacuoles throughout the entire life cycle of the cells. Involved in retrieval of late-Golgi SNAREs from post-Golgi endosomes to the trans-Golgi network, for cytoplasm to vacuole transport (Cvt), and autophagy of large cargos including mitophagy, pexophagy and glycophagy. This chain is Sorting nexin-4 (SNX4), found in Candida glabrata (strain ATCC 2001 / BCRC 20586 / JCM 3761 / NBRC 0622 / NRRL Y-65 / CBS 138) (Yeast).